We begin with the raw amino-acid sequence, 180 residues long: MAELVAKRYAKALFQVAFEMNRYEDVTEELAFVAENLKQHSDLNELLKSPVITLGEKKEILSTIFKEQISPEVFNFLRILLDKSRQGDFQEIYEEYKILADAGKNKIEAVAITALPMDNNDLLKLQVNLSMSSGKNVKLKNEIDPTVIGGVLVKMGDKIIDGTVKARLNQMQDQLLQIIV.

The protein belongs to the ATPase delta chain family. As to quaternary structure, F-type ATPases have 2 components, F(1) - the catalytic core - and F(0) - the membrane proton channel. F(1) has five subunits: alpha(3), beta(3), gamma(1), delta(1), epsilon(1). F(0) has three main subunits: a(1), b(2) and c(10-14). The alpha and beta chains form an alternating ring which encloses part of the gamma chain. F(1) is attached to F(0) by a central stalk formed by the gamma and epsilon chains, while a peripheral stalk is formed by the delta and b chains.

It is found in the cell membrane. F(1)F(0) ATP synthase produces ATP from ADP in the presence of a proton or sodium gradient. F-type ATPases consist of two structural domains, F(1) containing the extramembraneous catalytic core and F(0) containing the membrane proton channel, linked together by a central stalk and a peripheral stalk. During catalysis, ATP synthesis in the catalytic domain of F(1) is coupled via a rotary mechanism of the central stalk subunits to proton translocation. Functionally, this protein is part of the stalk that links CF(0) to CF(1). It either transmits conformational changes from CF(0) to CF(1) or is implicated in proton conduction. This is ATP synthase subunit delta from Alkaliphilus metalliredigens (strain QYMF).